The sequence spans 140 residues: Inner membrane protein YphA (140 aa).

The Cytoplasmic segment spans residues 1-13 (MNTLRYFDFGAAR). The chain crosses the membrane as a helical span at residues 14-34 (PVLLLIARIAVVLIFIIFGFP). The Periplasmic segment spans residues 35 to 56 (KMMGFDGTVQYMASLGAPMPML). The helical transmembrane segment at 57–77 (AAIIAVVMEVPAAILIVLGFF) threads the bilayer. Over 78 to 79 (TR) the chain is Cytoplasmic. A helical transmembrane segment spans residues 80–100 (PLAVLFIFYTLGTAVIGHHYW). The Periplasmic portion of the chain corresponds to 101–116 (DMTGDAVGPNMINFWK). Residues 117–137 (NVSIAGAFLLLAITGPGAISL) form a helical membrane-spanning segment. At 138-140 (DRR) the chain is on the cytoplasmic side.

It belongs to the DoxX family.

It localises to the cell inner membrane. This Escherichia coli (strain K12) protein is Inner membrane protein YphA (yphA).